We begin with the raw amino-acid sequence, 276 residues long: Rhomboid protease GlpG (276 aa).

A run of 6 helical transmembrane segments spans residues Gly-94–Ile-114, Ile-142–Gly-162, Leu-169–Gln-189, Phe-192–Trp-212, Leu-229–Met-249, and Ala-250–Leu-270. The active-site Nucleophile is the Ser-201. His-254 is a catalytic residue.

This sequence belongs to the peptidase S54 family.

The protein resides in the cell inner membrane. It carries out the reaction Cleaves type-1 transmembrane domains using a catalytic dyad composed of serine and histidine that are contributed by different transmembrane domains.. Rhomboid-type serine protease that catalyzes intramembrane proteolysis. The sequence is that of Rhomboid protease GlpG from Salmonella typhi.